The sequence spans 86 residues: Anti-adapter protein IraP (86 aa).

Positions 1–36 form a coiled coil; sequence MKNLIAELLLKLAQKEEESKELCAQVEALEIIVTAM.

It belongs to the IraP family. As to quaternary structure, interacts with RssB.

It is found in the cytoplasm. Its function is as follows. Inhibits RpoS proteolysis by regulating RssB activity, thereby increasing the stability of the sigma stress factor RpoS especially during phosphate starvation, but also in stationary phase and during nitrogen starvation. Its effect on RpoS stability is due to its interaction with RssB, which probably blocks the interaction of RssB with RpoS, and the consequent delivery of the RssB-RpoS complex to the ClpXP protein degradation pathway. This Shigella boydii serotype 4 (strain Sb227) protein is Anti-adapter protein IraP.